The primary structure comprises 722 residues: Bifunctional UDP-N-acetylglucosamine 2-epimerase/N-acetylmannosamine kinase (722 aa).

5 residues coordinate UDP: R19, S23, R113, H220, and N253. Residues K259, E271, K280, and H281 each contribute to the CMP-N-acetyl-beta-neuraminate site. UDP contacts are provided by V282, S301, S302, E307, and R321. The segment at 406–722 (TLSALAVDLG…VLDYTTRRIH (317 aa)) is N-acetylmannosamine kinase. D413 is a Mg(2+) binding site. Residue G416 coordinates an N-acyl-D-mannosamine 6-phosphate. ADP-binding residues include T417, N418, and R420. An N-acyl-D-mannosamine 6-phosphate-binding residues include G476, R477, T489, N516, D517, and G545. Positions 476, 477, 489, 516, and 517 each coordinate an N-acyl-D-mannosamine. Residue D517 is part of the active site. The an N-acyl-D-mannosamine site is built by E566 and H569. H569 lines the an N-acyl-D-mannosamine 6-phosphate pocket. 4 residues coordinate Zn(2+): H569, C579, C581, and C586. An an N-acyl-D-mannosamine 6-phosphate-binding site is contributed by E588. An N-acyl-D-mannosamine is bound at residue E588.

It in the N-terminal section; belongs to the UDP-N-acetylglucosamine 2-epimerase family. This sequence in the C-terminal section; belongs to the ROK (NagC/XylR) family. In terms of assembly, homodimer. Homotetramer. Homohexamer. The hexameric form exhibits both enzyme activities, whereas the dimeric form only catalyzes the phosphorylation of N-acyl-D-mannosamine. In terms of processing, phosphorylated. Phosphorylation by PKC activates the UDP-N-acetylglucosamine 2-epimerase activity. As to expression, widely expressed. Highest expression in liver. Also found at high levels in lung, brain and kidney.

The protein resides in the cytoplasm. It localises to the cytosol. It catalyses the reaction UDP-N-acetyl-alpha-D-glucosamine + H2O = aldehydo-N-acetyl-D-mannosamine + UDP + H(+). It carries out the reaction an N-acyl-D-mannosamine + ATP = an N-acyl-D-mannosamine 6-phosphate + ADP + H(+). The protein operates within amino-sugar metabolism; N-acetylneuraminate biosynthesis. With respect to regulation, the UDP-N-acetylglucosamine 2-epimerase activity, in contrast to the N-acetylmannosamine kinase activity, exhibits allosteric regulation by cytidine monophosphate-N-acetylneuraminic acid (CMP-Neu5Ac), the end product of neuraminic acid biosynthesis. Moreover, the activity is contingent upon the oligomeric state of the enzyme. The monomeric form is inactive, while the dimeric form selectively catalyzes the phosphorylation of N-acetylmannosamine. The hexameric form, on the other hand, demonstrates full proficiency in both enzyme activities. Furthermore, the UDP-N-acetylglucosamine 2-epimerase activity is increased by PKC-mediated phosphorylation. Its function is as follows. Bifunctional enzyme that possesses both UDP-N-acetylglucosamine 2-epimerase and N-acetylmannosamine kinase activities, and serves as the initiator of the biosynthetic pathway leading to the production of N-acetylneuraminic acid (NeuAc), a critical precursor in the synthesis of sialic acids. By catalyzing this pivotal and rate-limiting step in sialic acid biosynthesis, this enzyme assumes a pivotal role in governing the regulation of cell surface sialylation, playing a role in embryonic angiogenesis. Sialic acids represent a category of negatively charged sugars that reside on the surface of cells as terminal components of glycoconjugates and mediate important functions in various cellular processes, including cell adhesion, signal transduction, and cellular recognition. This Mus musculus (Mouse) protein is Bifunctional UDP-N-acetylglucosamine 2-epimerase/N-acetylmannosamine kinase.